The sequence spans 379 residues: Chaperone protein DnaJ (379 aa).

The 66-residue stretch at 5–70 (DYYEVLGVQK…QKRAAYDRFG (66 aa)) folds into the J domain. A CR-type zinc finger spans residues 137–215 (GATTTVRVPT…CGGQGRVRKE (79 aa)). Residues cysteine 150, cysteine 153, cysteine 167, cysteine 170, cysteine 189, cysteine 192, cysteine 203, and cysteine 206 each contribute to the Zn(2+) site. CXXCXGXG motif repeat units lie at residues 150–157 (CESCNGTG), 167–174 (CPTCNGHG), 189–196 (CPACHGVG), and 203–210 (CRTCGGQG).

The protein belongs to the DnaJ family. As to quaternary structure, homodimer. The cofactor is Zn(2+).

Its subcellular location is the cytoplasm. In terms of biological role, participates actively in the response to hyperosmotic and heat shock by preventing the aggregation of stress-denatured proteins and by disaggregating proteins, also in an autonomous, DnaK-independent fashion. Unfolded proteins bind initially to DnaJ; upon interaction with the DnaJ-bound protein, DnaK hydrolyzes its bound ATP, resulting in the formation of a stable complex. GrpE releases ADP from DnaK; ATP binding to DnaK triggers the release of the substrate protein, thus completing the reaction cycle. Several rounds of ATP-dependent interactions between DnaJ, DnaK and GrpE are required for fully efficient folding. Also involved, together with DnaK and GrpE, in the DNA replication of plasmids through activation of initiation proteins. In Rhodospirillum centenum (strain ATCC 51521 / SW), this protein is Chaperone protein DnaJ.